A 287-amino-acid polypeptide reads, in one-letter code: Phosphatidylserine decarboxylase proenzyme (287 aa).

Active-site charge relay system; for autoendoproteolytic cleavage activity residues include Asp-89, His-146, and Ser-252. The active-site Schiff-base intermediate with substrate; via pyruvic acid; for decarboxylase activity is Ser-252. At Ser-252 the chain carries Pyruvic acid (Ser); by autocatalysis.

The protein belongs to the phosphatidylserine decarboxylase family. PSD-B subfamily. Prokaryotic type I sub-subfamily. As to quaternary structure, heterodimer of a large membrane-associated beta subunit and a small pyruvoyl-containing alpha subunit. The cofactor is pyruvate. Is synthesized initially as an inactive proenzyme. Formation of the active enzyme involves a self-maturation process in which the active site pyruvoyl group is generated from an internal serine residue via an autocatalytic post-translational modification. Two non-identical subunits are generated from the proenzyme in this reaction, and the pyruvate is formed at the N-terminus of the alpha chain, which is derived from the carboxyl end of the proenzyme. The autoendoproteolytic cleavage occurs by a canonical serine protease mechanism, in which the side chain hydroxyl group of the serine supplies its oxygen atom to form the C-terminus of the beta chain, while the remainder of the serine residue undergoes an oxidative deamination to produce ammonia and the pyruvoyl prosthetic group on the alpha chain. During this reaction, the Ser that is part of the protease active site of the proenzyme becomes the pyruvoyl prosthetic group, which constitutes an essential element of the active site of the mature decarboxylase.

The protein localises to the cell membrane. It catalyses the reaction a 1,2-diacyl-sn-glycero-3-phospho-L-serine + H(+) = a 1,2-diacyl-sn-glycero-3-phosphoethanolamine + CO2. The protein operates within phospholipid metabolism; phosphatidylethanolamine biosynthesis; phosphatidylethanolamine from CDP-diacylglycerol: step 2/2. In terms of biological role, catalyzes the formation of phosphatidylethanolamine (PtdEtn) from phosphatidylserine (PtdSer). This is Phosphatidylserine decarboxylase proenzyme from Shewanella amazonensis (strain ATCC BAA-1098 / SB2B).